The following is a 315-amino-acid chain: tRNA dimethylallyltransferase (315 aa).

15 to 22 (GPTACGKS) provides a ligand contact to ATP. Residue 17 to 22 (TACGKS) coordinates substrate. Interaction with substrate tRNA regions lie at residues 40 to 43 (DSAL) and 162 to 166 (QRLIR).

This sequence belongs to the IPP transferase family. As to quaternary structure, monomer. Mg(2+) serves as cofactor.

The catalysed reaction is adenosine(37) in tRNA + dimethylallyl diphosphate = N(6)-dimethylallyladenosine(37) in tRNA + diphosphate. Its function is as follows. Catalyzes the transfer of a dimethylallyl group onto the adenine at position 37 in tRNAs that read codons beginning with uridine, leading to the formation of N6-(dimethylallyl)adenosine (i(6)A). The polypeptide is tRNA dimethylallyltransferase (Buchnera aphidicola subsp. Acyrthosiphon pisum (strain APS) (Acyrthosiphon pisum symbiotic bacterium)).